Consider the following 293-residue polypeptide: Proline iminopeptidase (293 aa).

The active-site Nucleophile is S105. D244 is an active-site residue. The Proton donor role is filled by H271.

Belongs to the peptidase S33 family. In terms of assembly, part of the tricorn proteolytic complex.

It carries out the reaction Release of N-terminal proline from a peptide.. Cleaves H-Pro-AMC as well as a wide spectrum of amino acid substrates and several peptide substrates without a proline at the N-terminus. Proteases F1, F2 and F3 degrade oligopeptides produced by Tricorn (themselves probably produced by the proteasome) yielding free amino acids. The polypeptide is Proline iminopeptidase (pip) (Thermoplasma acidophilum (strain ATCC 25905 / DSM 1728 / JCM 9062 / NBRC 15155 / AMRC-C165)).